Here is a 121-residue protein sequence, read N- to C-terminus: Large ribosomal subunit protein uL14 (121 aa).

This sequence belongs to the universal ribosomal protein uL14 family. Part of the 50S ribosomal subunit. Forms a cluster with proteins L3 and L19. In the 70S ribosome, L14 and L19 interact and together make contacts with the 16S rRNA in bridges B5 and B8.

In terms of biological role, binds to 23S rRNA. Forms part of two intersubunit bridges in the 70S ribosome. The protein is Large ribosomal subunit protein uL14 of Parasynechococcus marenigrum (strain WH8102).